Here is a 173-residue protein sequence, read N- to C-terminus: Superoxide dismutase [Cu-Zn] 2 (173 aa).

A signal peptide spans 1–19 (MKRLSLAMVTLLACAGAQA). The Cu cation site is built by H67, H69, and H92. C74 and C169 are joined by a disulfide. Zn(2+) is bound by residues H92, H101, H109, and D112. Position 147 (H147) interacts with Cu cation.

It belongs to the Cu-Zn superoxide dismutase family. In terms of assembly, monomer. Requires Cu cation as cofactor. Zn(2+) is required as a cofactor.

The protein localises to the periplasm. The catalysed reaction is 2 superoxide + 2 H(+) = H2O2 + O2. Functionally, destroys radicals which are normally produced within the cells and which are toxic to biological systems. This Salmonella typhimurium (strain LT2 / SGSC1412 / ATCC 700720) protein is Superoxide dismutase [Cu-Zn] 2 (sodC).